The primary structure comprises 283 residues: Peroxisome biogenesis protein 22 (283 aa).

A2 carries the post-translational modification N-acetylalanine. The chain crosses the membrane as a helical span at residues 45 to 62; it reads IGAIAGLAIAVIFTWRAI. Residues 66–107 form a disordered region; sequence GEQRQRRQPKRRIHNAETSSAAAAASQSNLASSVAPEVSSPR. Over residues 81 to 100 the composition is skewed to low complexity; sequence AETSSAAAAASQSNLASSVA.

This sequence belongs to the peroxin-22 family. Interacts with PEX4.

Its subcellular location is the peroxisome membrane. May be tethered PEX4 to the peroxisome membrane and may be involved in a late step of the matrix protein import. Does not play a role in the biogenesis of the peroxisomal membrane. The polypeptide is Peroxisome biogenesis protein 22 (PEX22) (Arabidopsis thaliana (Mouse-ear cress)).